The chain runs to 164 residues: Thiol peroxidase (164 aa).

The region spanning 18–163 (VNEGDIAPNF…FEAALKAYRN (146 aa)) is the Thioredoxin domain. Residue Cys-60 is the Cysteine sulfenic acid (-SOH) intermediate of the active site. Cys-60 and Cys-93 are disulfide-bonded.

This sequence belongs to the peroxiredoxin family. Tpx subfamily. As to quaternary structure, homodimer.

It catalyses the reaction a hydroperoxide + [thioredoxin]-dithiol = an alcohol + [thioredoxin]-disulfide + H2O. Its function is as follows. Thiol-specific peroxidase that catalyzes the reduction of hydrogen peroxide and organic hydroperoxides to water and alcohols, respectively. Plays a role in cell protection against oxidative stress by detoxifying peroxides. This Staphylococcus epidermidis (strain ATCC 35984 / DSM 28319 / BCRC 17069 / CCUG 31568 / BM 3577 / RP62A) protein is Thiol peroxidase.